A 369-amino-acid polypeptide reads, in one-letter code: Anhydro-N-acetylmuramic acid kinase (369 aa).

Residue 12 to 19 coordinates ATP; the sequence is GTSLDGVD.

It belongs to the anhydro-N-acetylmuramic acid kinase family.

It catalyses the reaction 1,6-anhydro-N-acetyl-beta-muramate + ATP + H2O = N-acetyl-D-muramate 6-phosphate + ADP + H(+). Its pathway is amino-sugar metabolism; 1,6-anhydro-N-acetylmuramate degradation. The protein operates within cell wall biogenesis; peptidoglycan recycling. Functionally, catalyzes the specific phosphorylation of 1,6-anhydro-N-acetylmuramic acid (anhMurNAc) with the simultaneous cleavage of the 1,6-anhydro ring, generating MurNAc-6-P. Is required for the utilization of anhMurNAc either imported from the medium or derived from its own cell wall murein, and thus plays a role in cell wall recycling. The chain is Anhydro-N-acetylmuramic acid kinase from Escherichia coli (strain SE11).